The chain runs to 334 residues: Tryptophan--tRNA ligase (334 aa).

Residues 11 to 13 and 19 to 20 each bind ATP; these read QPT and GN. The 'HIGH' region motif lies at 12–20; sequence PTGKLTIGN. Aspartate 135 serves as a coordination point for L-tryptophan. ATP-binding positions include 147–149, isoleucine 186, and 195–199; these read GED and KMSKS. Residues 195–199 carry the 'KMSKS' region motif; that stretch reads KMSKS.

The protein belongs to the class-I aminoacyl-tRNA synthetase family. As to quaternary structure, homodimer.

It is found in the cytoplasm. It catalyses the reaction tRNA(Trp) + L-tryptophan + ATP = L-tryptophyl-tRNA(Trp) + AMP + diphosphate + H(+). Catalyzes the attachment of tryptophan to tRNA(Trp). This Blochmanniella floridana protein is Tryptophan--tRNA ligase.